Consider the following 192-residue polypeptide: Large ribosomal subunit protein uL6 (192 aa).

This sequence belongs to the universal ribosomal protein uL6 family. In terms of assembly, part of the 50S ribosomal subunit.

Functionally, this protein binds to the 23S rRNA, and is important in its secondary structure. It is located near the subunit interface in the base of the L7/L12 stalk, and near the tRNA binding site of the peptidyltransferase center. In Nanoarchaeum equitans (strain Kin4-M), this protein is Large ribosomal subunit protein uL6.